The primary structure comprises 429 residues: MSLKLEVKTEIKLDYQGFQNQINEFHKRINDKNSPDINFLGWNNFPEVAINPQEIARMRKIVENLHQNSINVLVVIGIGGSYLGAKAALDFILGLGPFENKPEVIFLGNSLSSTDLYQKIEYLKTKNFAINVISKSGSTIEPAITFQILYQFLIDQIGEKLAKTRTFVTTSIKSGELLEIAKSNELEIFEVIESIGGRFSVLSSVGFFPLLFAKINVDEIIQGAIEAHKKYSTSSISQNLAYKYALFRFLMYKNFNYKTEILISYEPFLIYFNEWWKQLFGESEGKNLKGLFPASAIFTTDLHSLGQFIQDGSKNFFQTIIYIKKPKFDLGIKKLVQFNSKINKLSGKTVSEINFQAFLATTLAHSSYGNNPNLVLEIADSSPKTFGHLVMFFEKACAMSAYLLGVNPFDQPGVESYKNELAKNLGWDR.

Residue E282 is the Proton donor of the active site. Catalysis depends on residues H303 and K418.

This sequence belongs to the GPI family.

Its subcellular location is the cytoplasm. The enzyme catalyses alpha-D-glucose 6-phosphate = beta-D-fructose 6-phosphate. Its pathway is carbohydrate biosynthesis; gluconeogenesis. The protein operates within carbohydrate degradation; glycolysis; D-glyceraldehyde 3-phosphate and glycerone phosphate from D-glucose: step 2/4. In terms of biological role, catalyzes the reversible isomerization of glucose-6-phosphate to fructose-6-phosphate. The chain is Glucose-6-phosphate isomerase from Mesomycoplasma hyopneumoniae (strain 7448) (Mycoplasma hyopneumoniae).